The sequence spans 78 residues: UPF0401 protein YubL (78 aa).

The protein belongs to the UPF0401 family.

This Salmonella typhi protein is UPF0401 protein YubL (yubL).